A 102-amino-acid chain; its full sequence is NADH-quinone oxidoreductase subunit K (102 aa).

A run of 3 helical transmembrane segments spans residues 6–26 (MEHGLALSGVLFSLGLIGLMV), 30–50 (ILFVLMSLEVMMNAAALAFVV), and 62–82 (IMFILVITLAAAEASIGLAIL).

The protein belongs to the complex I subunit 4L family. NDH-1 is composed of 13 different subunits. Subunits NuoA, H, J, K, L, M, N constitute the membrane sector of the complex.

It is found in the cell inner membrane. The catalysed reaction is a quinone + NADH + 5 H(+)(in) = a quinol + NAD(+) + 4 H(+)(out). In terms of biological role, NDH-1 shuttles electrons from NADH, via FMN and iron-sulfur (Fe-S) centers, to quinones in the respiratory chain. The immediate electron acceptor for the enzyme in this species is believed to be ubiquinone. Couples the redox reaction to proton translocation (for every two electrons transferred, four hydrogen ions are translocated across the cytoplasmic membrane), and thus conserves the redox energy in a proton gradient. The sequence is that of NADH-quinone oxidoreductase subunit K from Azotobacter vinelandii (strain DJ / ATCC BAA-1303).